Here is a 60-residue protein sequence, read N- to C-terminus: Large ribosomal subunit protein bL32 (60 aa).

The span at 1-19 shows a compositional bias: basic residues; it reads MAVPKRKKSKSRRNMHRSH. Residues 1–24 form a disordered region; sequence MAVPKRKKSKSRRNMHRSHHAIEP.

Belongs to the bacterial ribosomal protein bL32 family.

The protein is Large ribosomal subunit protein bL32 of Wolbachia pipientis wMel.